A 184-amino-acid polypeptide reads, in one-letter code: Photosystem I assembly protein Ycf4 (184 aa).

The next 2 helical transmembrane spans lie at 22–42 (FCWA…GISS) and 57–77 (ILFF…LFIS).

This sequence belongs to the Ycf4 family.

It is found in the plastid. The protein localises to the chloroplast thylakoid membrane. Functionally, seems to be required for the assembly of the photosystem I complex. This is Photosystem I assembly protein Ycf4 from Populus trichocarpa (Western balsam poplar).